We begin with the raw amino-acid sequence, 132 residues long: Small ribosomal subunit protein uS8 (132 aa).

It belongs to the universal ribosomal protein uS8 family. In terms of assembly, part of the 30S ribosomal subunit. Contacts proteins S5 and S12.

In terms of biological role, one of the primary rRNA binding proteins, it binds directly to 16S rRNA central domain where it helps coordinate assembly of the platform of the 30S subunit. In Streptococcus agalactiae serotype Ia (strain ATCC 27591 / A909 / CDC SS700), this protein is Small ribosomal subunit protein uS8.